Reading from the N-terminus, the 165-residue chain is Xanthine-guanine phosphoribosyltransferase (165 aa).

5-phospho-alpha-D-ribose 1-diphosphate-binding positions include 41–42 (RG) and 98–106 (DDLTDTGKT). D99 contacts Mg(2+). D102 and I145 together coordinate guanine. The xanthine site is built by D102 and I145. GMP is bound by residues 102–106 (DTGKT) and 144–145 (WI).

The protein belongs to the purine/pyrimidine phosphoribosyltransferase family. XGPT subfamily. As to quaternary structure, homotetramer. Mg(2+) is required as a cofactor.

The protein resides in the cell inner membrane. The catalysed reaction is GMP + diphosphate = guanine + 5-phospho-alpha-D-ribose 1-diphosphate. It carries out the reaction XMP + diphosphate = xanthine + 5-phospho-alpha-D-ribose 1-diphosphate. It catalyses the reaction IMP + diphosphate = hypoxanthine + 5-phospho-alpha-D-ribose 1-diphosphate. It functions in the pathway purine metabolism; GMP biosynthesis via salvage pathway; GMP from guanine: step 1/1. It participates in purine metabolism; XMP biosynthesis via salvage pathway; XMP from xanthine: step 1/1. Its function is as follows. Purine salvage pathway enzyme that catalyzes the transfer of the ribosyl-5-phosphate group from 5-phospho-alpha-D-ribose 1-diphosphate (PRPP) to the N9 position of the 6-oxopurines guanine and xanthine to form the corresponding ribonucleotides GMP (guanosine 5'-monophosphate) and XMP (xanthosine 5'-monophosphate), with the release of PPi. To a lesser extent, also acts on hypoxanthine. The polypeptide is Xanthine-guanine phosphoribosyltransferase (Agrobacterium fabrum (strain C58 / ATCC 33970) (Agrobacterium tumefaciens (strain C58))).